The primary structure comprises 307 residues: 4-hydroxythreonine-4-phosphate dehydrogenase (307 aa).

Substrate contacts are provided by His-126 and Thr-127. His-156, His-195, and His-251 together coordinate a divalent metal cation. Lys-259, Asn-268, and Arg-277 together coordinate substrate.

Belongs to the PdxA family. As to quaternary structure, homodimer. Requires Zn(2+) as cofactor. Mg(2+) is required as a cofactor. Co(2+) serves as cofactor.

The protein resides in the cytoplasm. It catalyses the reaction 4-(phosphooxy)-L-threonine + NAD(+) = 3-amino-2-oxopropyl phosphate + CO2 + NADH. It functions in the pathway cofactor biosynthesis; pyridoxine 5'-phosphate biosynthesis; pyridoxine 5'-phosphate from D-erythrose 4-phosphate: step 4/5. Catalyzes the NAD(P)-dependent oxidation of 4-(phosphooxy)-L-threonine (HTP) into 2-amino-3-oxo-4-(phosphooxy)butyric acid which spontaneously decarboxylates to form 3-amino-2-oxopropyl phosphate (AHAP). The chain is 4-hydroxythreonine-4-phosphate dehydrogenase from Helicobacter pylori (strain Shi470).